The primary structure comprises 471 residues: ATP synthase subunit beta (471 aa).

154–161 (GGAGVGKT) contributes to the ATP binding site.

This sequence belongs to the ATPase alpha/beta chains family. In terms of assembly, F-type ATPases have 2 components, CF(1) - the catalytic core - and CF(0) - the membrane proton channel. CF(1) has five subunits: alpha(3), beta(3), gamma(1), delta(1), epsilon(1). CF(0) has three main subunits: a(1), b(2) and c(9-12). The alpha and beta chains form an alternating ring which encloses part of the gamma chain. CF(1) is attached to CF(0) by a central stalk formed by the gamma and epsilon chains, while a peripheral stalk is formed by the delta and b chains.

It is found in the cell membrane. The catalysed reaction is ATP + H2O + 4 H(+)(in) = ADP + phosphate + 5 H(+)(out). In terms of biological role, produces ATP from ADP in the presence of a proton gradient across the membrane. The catalytic sites are hosted primarily by the beta subunits. The chain is ATP synthase subunit beta from Mesomycoplasma hyopneumoniae (strain 7448) (Mycoplasma hyopneumoniae).